The sequence spans 110 residues: Large ribosomal subunit protein uL22 (110 aa).

This sequence belongs to the universal ribosomal protein uL22 family. As to quaternary structure, part of the 50S ribosomal subunit.

Its function is as follows. This protein binds specifically to 23S rRNA; its binding is stimulated by other ribosomal proteins, e.g. L4, L17, and L20. It is important during the early stages of 50S assembly. It makes multiple contacts with different domains of the 23S rRNA in the assembled 50S subunit and ribosome. The globular domain of the protein is located near the polypeptide exit tunnel on the outside of the subunit, while an extended beta-hairpin is found that lines the wall of the exit tunnel in the center of the 70S ribosome. This Idiomarina loihiensis (strain ATCC BAA-735 / DSM 15497 / L2-TR) protein is Large ribosomal subunit protein uL22.